Reading from the N-terminus, the 250-residue chain is Proteasome subunit alpha (250 aa).

Belongs to the peptidase T1A family. The 20S proteasome core is composed of 14 alpha and 14 beta subunits that assemble into four stacked heptameric rings, resulting in a barrel-shaped structure. The two inner rings, each composed of seven catalytic beta subunits, are sandwiched by two outer rings, each composed of seven alpha subunits. The catalytic chamber with the active sites is on the inside of the barrel. Has a gated structure, the ends of the cylinder being occluded by the N-termini of the alpha-subunits. Is capped at one or both ends by the proteasome regulatory ATPase, PAN.

Its subcellular location is the cytoplasm. The formation of the proteasomal ATPase PAN-20S proteasome complex, via the docking of the C-termini of PAN into the intersubunit pockets in the alpha-rings, triggers opening of the gate for substrate entry. Interconversion between the open-gate and close-gate conformations leads to a dynamic regulation of the 20S proteasome proteolysis activity. Component of the proteasome core, a large protease complex with broad specificity involved in protein degradation. The polypeptide is Proteasome subunit alpha (Methanobrevibacter smithii (strain ATCC 35061 / DSM 861 / OCM 144 / PS)).